Reading from the N-terminus, the 367-residue chain is UDP-N-acetylglucosamine--N-acetylmuramyl-(pentapeptide) pyrophosphoryl-undecaprenol N-acetylglucosamine transferase (367 aa).

Residues 15–17 (TGG), asparagine 127, arginine 163, serine 191, isoleucine 249, and glutamine 294 contribute to the UDP-N-acetyl-alpha-D-glucosamine site.

It belongs to the glycosyltransferase 28 family. MurG subfamily.

It is found in the cell inner membrane. The catalysed reaction is di-trans,octa-cis-undecaprenyl diphospho-N-acetyl-alpha-D-muramoyl-L-alanyl-D-glutamyl-meso-2,6-diaminopimeloyl-D-alanyl-D-alanine + UDP-N-acetyl-alpha-D-glucosamine = di-trans,octa-cis-undecaprenyl diphospho-[N-acetyl-alpha-D-glucosaminyl-(1-&gt;4)]-N-acetyl-alpha-D-muramoyl-L-alanyl-D-glutamyl-meso-2,6-diaminopimeloyl-D-alanyl-D-alanine + UDP + H(+). The protein operates within cell wall biogenesis; peptidoglycan biosynthesis. Functionally, cell wall formation. Catalyzes the transfer of a GlcNAc subunit on undecaprenyl-pyrophosphoryl-MurNAc-pentapeptide (lipid intermediate I) to form undecaprenyl-pyrophosphoryl-MurNAc-(pentapeptide)GlcNAc (lipid intermediate II). The polypeptide is UDP-N-acetylglucosamine--N-acetylmuramyl-(pentapeptide) pyrophosphoryl-undecaprenol N-acetylglucosamine transferase (Burkholderia mallei (strain NCTC 10247)).